We begin with the raw amino-acid sequence, 240 residues long: Flavin-dependent thymidylate synthase (240 aa).

The 223-residue stretch at 13–235 (ITVELVKHSA…PETHAAFEKQ (223 aa)) folds into the ThyX domain. Residues S64, 87 to 89 (RHR), and E95 contribute to the FAD site. DUMP is bound by residues 84–87 (EFMR), 95–99 (EESGR), and R167. The short motif at 87–97 (RHRIASYNEES) is the ThyX motif element. FAD contacts are provided by residues 183–185 (NAR) and N189. R194 contributes to the dUMP binding site. R194 functions as the Involved in ionization of N3 of dUMP, leading to its activation in the catalytic mechanism.

This sequence belongs to the thymidylate synthase ThyX family. In terms of assembly, homotetramer. Requires FAD as cofactor.

It catalyses the reaction dUMP + (6R)-5,10-methylene-5,6,7,8-tetrahydrofolate + NADPH + H(+) = dTMP + (6S)-5,6,7,8-tetrahydrofolate + NADP(+). Its pathway is pyrimidine metabolism; dTTP biosynthesis. In terms of biological role, catalyzes the reductive methylation of 2'-deoxyuridine-5'-monophosphate (dUMP) to 2'-deoxythymidine-5'-monophosphate (dTMP) while utilizing 5,10-methylenetetrahydrofolate (mTHF) as the methyl donor, and NADPH and FADH(2) as the reductant. The sequence is that of Flavin-dependent thymidylate synthase from Tropheryma whipplei (strain TW08/27) (Whipple's bacillus).